The following is a 94-amino-acid chain: MLKPLGDRVVLKVEEKEQTVGGFVLAGSAQEKTKTAQVVATGQGVRTLNGDLVAPSVKTGDRVLVEAHAGLDVKDGDEKYIIVGEANILAIIEE.

It belongs to the GroES chaperonin family. As to quaternary structure, heptamer of 7 subunits arranged in a ring. Interacts with the chaperonin GroEL.

It localises to the cytoplasm. In terms of biological role, together with the chaperonin GroEL, plays an essential role in assisting protein folding. The GroEL-GroES system forms a nano-cage that allows encapsulation of the non-native substrate proteins and provides a physical environment optimized to promote and accelerate protein folding. GroES binds to the apical surface of the GroEL ring, thereby capping the opening of the GroEL channel. The polypeptide is Co-chaperonin GroES (Streptococcus pneumoniae (strain Taiwan19F-14)).